A 59-amino-acid polypeptide reads, in one-letter code: MKTNREQEIYVERSFKPNNSTIQNLMDIERFILPHTSTSGVARLKMRVISWVGLQFYNY.

In terms of tissue distribution, expressed in hypocotyls, leaves, vasculature, hydathodes, trichomes, pedicels, sepals, filaments, mature pollen, stigma papillae, styles, siliques, root and shoot tips, but not in shoot meristem, petals or root epidermis.

It is found in the cytoplasm. In terms of biological role, involved in regulating carbon and nitrogen allocation to starch and protein. In Arabidopsis thaliana (Mouse-ear cress), this protein is Protein QUA-QUINE STARCH.